The primary structure comprises 343 residues: Protein RecA (343 aa).

Position 64–71 (64–71) interacts with ATP; the sequence is GPESSGKT.

This sequence belongs to the RecA family.

It is found in the cytoplasm. Its function is as follows. Can catalyze the hydrolysis of ATP in the presence of single-stranded DNA, the ATP-dependent uptake of single-stranded DNA by duplex DNA, and the ATP-dependent hybridization of homologous single-stranded DNAs. It interacts with LexA causing its activation and leading to its autocatalytic cleavage. The chain is Protein RecA from Bacillus cereus (strain ATCC 14579 / DSM 31 / CCUG 7414 / JCM 2152 / NBRC 15305 / NCIMB 9373 / NCTC 2599 / NRRL B-3711).